The sequence spans 360 residues: Aminomethyltransferase (360 aa).

The protein belongs to the GcvT family. The glycine cleavage system is composed of four proteins: P, T, L and H.

The enzyme catalyses N(6)-[(R)-S(8)-aminomethyldihydrolipoyl]-L-lysyl-[protein] + (6S)-5,6,7,8-tetrahydrofolate = N(6)-[(R)-dihydrolipoyl]-L-lysyl-[protein] + (6R)-5,10-methylene-5,6,7,8-tetrahydrofolate + NH4(+). In terms of biological role, the glycine cleavage system catalyzes the degradation of glycine. The sequence is that of Aminomethyltransferase from Flavobacterium psychrophilum (strain ATCC 49511 / DSM 21280 / CIP 103535 / JIP02/86).